Reading from the N-terminus, the 173-residue chain is Shikimate kinase 2 (173 aa).

12–17 (GCGKTT) lines the ATP pocket. Positions 16 and 32 each coordinate Mg(2+). Residues Asp-34, Arg-58, and Gly-79 each coordinate substrate. The interval 112–126 (EENPQDNQRPTLTGR) is LID domain. Residue Arg-120 participates in ATP binding. Residue Arg-139 participates in substrate binding. Gln-155 is an ATP binding site.

Belongs to the shikimate kinase family. AroL subfamily. In terms of assembly, monomer. Mg(2+) serves as cofactor.

The protein resides in the cytoplasm. It carries out the reaction shikimate + ATP = 3-phosphoshikimate + ADP + H(+). Its pathway is metabolic intermediate biosynthesis; chorismate biosynthesis; chorismate from D-erythrose 4-phosphate and phosphoenolpyruvate: step 5/7. Catalyzes the specific phosphorylation of the 3-hydroxyl group of shikimic acid using ATP as a cosubstrate. This is Shikimate kinase 2 from Pectobacterium carotovorum subsp. carotovorum (strain PC1).